The chain runs to 137 residues: Major seminal plasma glycoprotein PSP-II (137 aa).

The first 21 residues, 1 to 21, serve as a signal peptide directing secretion; that stretch reads MKLGTAIPWALLLSTATLVST. 2 cysteine pairs are disulfide-bonded: Cys-30-Cys-51 and Cys-74-Cys-95. A CUB domain is found at 30 to 131; sequence CGRVIKDTSG…SPFLIYFYGS (102 aa). A glycan (N-linked (GlcNAc...) (complex) asparagine) is linked at Asn-119.

Monomer or heterodimer with PSP-I (depending on the type of glycosylation of PSP-I). As to expression, seminal plasma or sperm.

The protein resides in the secreted. The protein is Major seminal plasma glycoprotein PSP-II of Sus scrofa (Pig).